We begin with the raw amino-acid sequence, 276 residues long: Alpha N-terminal protein methyltransferase 1 (276 aa).

Positions 1–57 (MTTTLEEQLSDKLQMMDETTDKVQGSSKQKDDSSIAASSDAKTASPSSSDSSTKVAA) are disordered. The segment covering 34 to 57 (SIAASSDAKTASPSSSDSSTKVAA) has biased composition (low complexity). S-adenosyl-L-methionine contacts are provided by residues Gly-114, Arg-119, 136-138 (EQD), 167-168 (LQ), and Gln-182.

This sequence belongs to the methyltransferase superfamily. NTM1 family.

It catalyses the reaction N-terminal L-alanyl-L-prolyl-L-lysyl-[protein] + 3 S-adenosyl-L-methionine = N-terminal N,N,N-trimethyl-L-alanyl-L-prolyl-L-lysyl-[protein] + 3 S-adenosyl-L-homocysteine + 3 H(+). It carries out the reaction N-terminal L-seryl-L-prolyl-L-lysyl-[protein] + 3 S-adenosyl-L-methionine = N-terminal N,N,N-trimethyl-L-seryl-L-prolyl-L-lysyl-[protein] + 3 S-adenosyl-L-homocysteine + 3 H(+). The catalysed reaction is N-terminal L-prolyl-L-prolyl-L-lysyl-[protein] + 2 S-adenosyl-L-methionine = N-terminal N,N-dimethyl-L-prolyl-L-prolyl-L-lysyl-[protein] + 2 S-adenosyl-L-homocysteine + 2 H(+). Functionally, alpha-N-methyltransferase that methylates the N-terminus of target proteins containing the N-terminal motif [Ala/Pro/Ser]-Pro-Lys when the initiator Met is cleaved. Specifically catalyzes mono-, di- or tri-methylation of exposed alpha-amino group of Ala or Ser residue in the [Ala/Ser]-Pro-Lys motif and mono- or di-methylation of Pro in the Pro-Pro-Lys motif. This Drosophila melanogaster (Fruit fly) protein is Alpha N-terminal protein methyltransferase 1 (Ntmt).